The primary structure comprises 760 residues: DNA replication licensing factor mcm7 (760 aa).

Positions 353–559 (VYEKLAKSIA…ETDEHLAQHV (207 aa)) constitute an MCM domain. 8 residues coordinate ATP: Y366, G406, A408, K409, S410, N511, R536, and R630. Positions 535–538 (SRFD) match the Arginine finger motif.

The protein belongs to the MCM family. In terms of assembly, component of the mcm2-7 complex. The complex forms a toroidal hexameric ring with the proposed subunit order mcm2-mcm6-mcm4-mcm7-mcm3-mcm5. The heterodimers of mcm4/mcm6 and mcm3/mcm5 interact with mcm2 and mcm7. Interacts with sld3 and mcm10.

It is found in the nucleus. It catalyses the reaction ATP + H2O = ADP + phosphate + H(+). Acts as a component of the MCM2-7 complex (MCM complex) which is the replicative helicase essential for 'once per cell cycle' DNA replication initiation and elongation in eukaryotic cells. Core component of CDC45-MCM-GINS (CMG) helicase, the molecular machine that unwinds template DNA during replication, and around which the replisome is built. The active ATPase sites in the MCM2-7 ring are formed through the interaction surfaces of two neighboring subunits such that a critical structure of a conserved arginine finger motif is provided in trans relative to the ATP-binding site of the Walker A box of the adjacent subunit. The six ATPase active sites, however, are likely to contribute differentially to the complex helicase activity. Required for the progression of S phase. In Schizosaccharomyces pombe (strain 972 / ATCC 24843) (Fission yeast), this protein is DNA replication licensing factor mcm7 (mcm7).